A 407-amino-acid polypeptide reads, in one-letter code: Probable 2,3-bisphosphoglycerate-independent phosphoglycerate mutase (407 aa).

The segment at 175-200 (GSDAINDTDPQQVGKEPLEPKGENPN) is disordered.

It belongs to the BPG-independent phosphoglycerate mutase family. A-PGAM subfamily.

It carries out the reaction (2R)-2-phosphoglycerate = (2R)-3-phosphoglycerate. It functions in the pathway carbohydrate degradation; glycolysis; pyruvate from D-glyceraldehyde 3-phosphate: step 3/5. Its function is as follows. Catalyzes the interconversion of 2-phosphoglycerate and 3-phosphoglycerate. This chain is Probable 2,3-bisphosphoglycerate-independent phosphoglycerate mutase, found in Aquifex aeolicus (strain VF5).